Here is a 575-residue protein sequence, read N- to C-terminus: SH2B adapter protein 3 (575 aa).

3 disordered regions span residues 1–23, 83–136, and 150–176; these read MNGPALQPSSPSSAPSASPAAAP, RAPG…CSFQ, and SAGELPAAHTAAAPGTPGEAAETPARP. Serine 13 carries the phosphoserine modification. Positions 83–93 are enriched in basic and acidic residues; that stretch reads RAPGRDYRDTG. Residues 95–104 are compositionally biased toward low complexity; it reads GPPAKAEASP. Residues serine 103, serine 120, and serine 150 each carry the phosphoserine modification. Positions 152-174 are enriched in low complexity; that stretch reads GELPAAHTAAAPGTPGEAAETPA. Residues 194–307 form the PH domain; it reads EALKEAVLRY…WMAELSECTG (114 aa). Residues 322-346 are disordered; sequence ALEPSTSSSPRGSTDSLNQGASPGG. Low complexity predominate over residues 325-337; that stretch reads PSTSSSPRGSTDS. At serine 330 the chain carries Phosphoserine. The region spanning 364 to 462 is the SH2 domain; the sequence is WFHGPISRVK…ACDVRLSSYV (99 aa). 2 disordered regions span residues 503–525 and 546–575; these read SSGCPRGLSPEGLPGRSSPPEQI and PVNRARDSDYEMDSSSRSHLRAIDNQYTPL.

Belongs to the SH2B adapter family. In terms of assembly, binds to the tyrosine-phosphorylated TCR zeta chain via its SH2 domain. Tyrosine phosphorylated by LCK. As to expression, preferentially expressed by lymphoid cell lines.

Links T-cell receptor activation signal to phospholipase C-gamma-1, GRB2 and phosphatidylinositol 3-kinase. This is SH2B adapter protein 3 (SH2B3) from Homo sapiens (Human).